A 391-amino-acid chain; its full sequence is Sister chromatid cohesion protein DCC1 (391 aa).

The protein belongs to the DCC1 family. As to quaternary structure, component of the ctf18-RFC complex which consists of ctf18, ctf8, dscc1 and the RFC complex.

Its subcellular location is the nucleus. In terms of biological role, loads pcna onto primed templates regulating velocity, spacing and restart activity of replication forks. May couple DNA replication to sister chromatid cohesion. The chain is Sister chromatid cohesion protein DCC1 (dscc1) from Xenopus tropicalis (Western clawed frog).